Reading from the N-terminus, the 265-residue chain is Indole-3-glycerol phosphate synthase (265 aa).

It belongs to the TrpC family.

The catalysed reaction is 1-(2-carboxyphenylamino)-1-deoxy-D-ribulose 5-phosphate + H(+) = (1S,2R)-1-C-(indol-3-yl)glycerol 3-phosphate + CO2 + H2O. Its pathway is amino-acid biosynthesis; L-tryptophan biosynthesis; L-tryptophan from chorismate: step 4/5. The polypeptide is Indole-3-glycerol phosphate synthase (Xanthomonas oryzae pv. oryzae (strain MAFF 311018)).